Reading from the N-terminus, the 448-residue chain is MSKQLVSIIDVPKHIGEEITIGAWVANKSGKGKIAFLQLRDGTAFFQGVAFKPNFIEKFGEEEGLEKFDTIKHLSQETSIYVTGMVKEDERSKFGYELDITDIEVIGKSQDYPITPKEHGTDFLMDNRHLWLRSRKQMAIQQIRNAIIYATYDFFDKNGFIKFDSPILSSNAAEDSTELFETDYFGTPAFLSQSGQLYLEAGAMALGRVFDFGPVFRAEKSKTRRHLTEFWMMDAEYSFLSHDESLDLQEAYVKALIQGAIDRAPQALEILERDVDLLKKYIAEPFKRVSYDEAIDLLQAHENDEDTDYEHLEHGDDFGSPHETWISNYFGVPTFVVNYPASFKAFYMKPVPGNPERVLCADLLAPEGYGEIIGGSMREDDYDALVAKMEELGMDRSEYEFYLDLRKYGSVPHGGFGIGIERMVTFVAGTKHIREAIPFPRMLHRIKP.

It belongs to the class-II aminoacyl-tRNA synthetase family. Homodimer.

The protein localises to the cytoplasm. It carries out the reaction tRNA(Asn) + L-asparagine + ATP = L-asparaginyl-tRNA(Asn) + AMP + diphosphate + H(+). The polypeptide is Asparagine--tRNA ligase (Streptococcus thermophilus (strain ATCC BAA-250 / LMG 18311)).